Consider the following 306-residue polypeptide: Pantothenate kinase (306 aa).

91 to 98 (GSVAVGKS) is a binding site for ATP.

It belongs to the prokaryotic pantothenate kinase family.

It localises to the cytoplasm. It carries out the reaction (R)-pantothenate + ATP = (R)-4'-phosphopantothenate + ADP + H(+). It functions in the pathway cofactor biosynthesis; coenzyme A biosynthesis; CoA from (R)-pantothenate: step 1/5. This chain is Pantothenate kinase, found in Streptococcus pneumoniae (strain Hungary19A-6).